Consider the following 353-residue polypeptide: Inactive ubiquitin thioesterase OTULINL (353 aa).

The tract at residues 1–80 (MEAPRSAPRE…KWWIGYLQRK (80 aa)) is required for membrane binding. The OTU domain maps to 125–353 (KCVRAVKRDN…NGHHYHIPVF (229 aa)).

This sequence belongs to the peptidase C65 family. Otulin subfamily. As to quaternary structure, does not bind ubiquitin or ubiquitin-like proteins.

The protein resides in the cytoplasm. The protein localises to the endoplasmic reticulum membrane. Its subcellular location is the nucleus envelope. Its function is as follows. Lacks deubiquitinase activity. The sequence is that of Inactive ubiquitin thioesterase OTULINL from Mus musculus (Mouse).